Here is a 136-residue protein sequence, read N- to C-terminus: Histone H3.1t (136 aa).

The interval 1–43 is disordered; it reads MARTKQTARKSTGGKAPRKQLATKVARKSAPATGGVKKPHRYR. At Arg3 the chain carries Asymmetric dimethylarginine; by PRMT6; alternate. Arg3 is modified (citrulline; alternate). Thr4 bears the Phosphothreonine; by HASPIN mark. Residue Lys5 is modified to Allysine; alternate. N6,N6,N6-trimethyllysine; alternate is present on Lys5. Lys5 is modified (N6,N6-dimethyllysine; alternate). The residue at position 5 (Lys5) is an N6-(2-hydroxyisobutyryl)lysine; alternate. The residue at position 5 (Lys5) is an N6-(beta-hydroxybutyryl)lysine; alternate. Lys5 is modified (N6-acetyllysine; alternate). At Lys5 the chain carries N6-methyllysine; alternate. Gln6 is modified (5-glutamyl dopamine; alternate). Gln6 carries the 5-glutamyl serotonin; alternate modification. Thr7 bears the Phosphothreonine; by PKC mark. Citrulline; alternate is present on Arg9. Symmetric dimethylarginine; by PRMT5; alternate is present on Arg9. An N6,N6,N6-trimethyllysine; alternate modification is found at Lys10. At Lys10 the chain carries N6,N6-dimethyllysine; alternate. Position 10 is an N6-(2-hydroxyisobutyryl)lysine; alternate (Lys10). An N6-(beta-hydroxybutyryl)lysine; alternate modification is found at Lys10. Lys10 is modified (N6-acetyllysine; alternate). N6-methyllysine; alternate is present on Lys10. Lys10 carries the N6-lactoyllysine; alternate modification. Ser11 carries the ADP-ribosylserine; alternate modification. Ser11 carries the post-translational modification Phosphoserine; alternate; by AURKB, AURKC, RPS6KA3, RPS6KA4 and RPS6KA5. Thr12 is modified (phosphothreonine; by PKC). Residue Lys15 is modified to N6-(2-hydroxyisobutyryl)lysine; alternate. Lys15 bears the N6-(beta-hydroxybutyryl)lysine; alternate mark. Lys15 is modified (N6-acetyllysine; alternate). The residue at position 15 (Lys15) is an N6-lactoyllysine; alternate. Residue Lys15 is modified to N6-glutaryllysine; alternate. Residue Lys15 is modified to N6-succinyllysine; alternate. At Arg18 the chain carries Citrulline; alternate. Arg18 carries the post-translational modification Asymmetric dimethylarginine; by CARM1; alternate. Lys19 and Lys24 each carry N6-(2-hydroxyisobutyryl)lysine; alternate. 2 positions are modified to N6-(beta-hydroxybutyryl)lysine; alternate: Lys19 and Lys24. Lys19 and Lys24 each carry N6-acetyllysine; alternate. 2 positions are modified to N6-methyllysine; alternate: Lys19 and Lys24. N6-lactoyllysine; alternate is present on residues Lys19 and Lys24. Residues Lys19 and Lys24 each carry the N6-glutaryllysine; alternate modification. An N6-butyryllysine; alternate mark is found at Lys19 and Lys24. A Citrulline modification is found at Arg27. Lys28 carries the post-translational modification N6,N6,N6-trimethyllysine; alternate. Position 28 is an N6,N6-dimethyllysine; alternate (Lys28). Lys28 carries the N6-(2-hydroxyisobutyryl)lysine; alternate modification. Lys28 carries the post-translational modification N6-acetyllysine; alternate. Lys28 is modified (N6-methyllysine; alternate). At Lys28 the chain carries N6-lactoyllysine; alternate. Lys28 carries the post-translational modification N6-glutaryllysine; alternate. Ser29 carries the post-translational modification ADP-ribosylserine; alternate. Ser29 bears the Phosphoserine; alternate; by AURKB, AURKC and RPS6KA5 mark. Lys37 is modified (N6,N6,N6-trimethyllysine; alternate). Lys37 carries the post-translational modification N6,N6-dimethyllysine; alternate. Lys37 is modified (N6-(2-hydroxyisobutyryl)lysine; alternate). The residue at position 37 (Lys37) is an N6-acetyllysine; alternate. Lys37 carries the post-translational modification N6-methyllysine; alternate. Lys38 is subject to N6-methyllysine. Tyr42 carries the phosphotyrosine modification. Lys57 carries the N6,N6,N6-trimethyllysine; alternate modification. Residue Lys57 is modified to N6-(2-hydroxyisobutyryl)lysine; alternate. Lys57 is modified (N6-(beta-hydroxybutyryl)lysine; alternate). Lys57 is subject to N6-acetyllysine; alternate. Residue Lys57 is modified to N6-lactoyllysine; alternate. Lys57 carries the post-translational modification N6-glutaryllysine; alternate. Lys57 carries the N6-succinyllysine; alternate modification. Lys57 carries the N6-methyllysine; by EHMT2; alternate modification. Phosphoserine is present on Ser58. N6-(2-hydroxyisobutyryl)lysine; alternate is present on residues Lys65 and Lys80. Residues Lys65 and Lys80 each carry the N6-methyllysine; alternate modification. N6,N6,N6-trimethyllysine; alternate is present on Lys80. An N6,N6-dimethyllysine; alternate modification is found at Lys80. Lys80 carries the post-translational modification N6-acetyllysine; alternate. At Lys80 the chain carries N6-lactoyllysine; alternate. Lys80 bears the N6-glutaryllysine; alternate mark. An N6-succinyllysine; alternate modification is found at Lys80. Thr81 is subject to Phosphothreonine. Ser87 carries the post-translational modification Phosphoserine. Thr108 carries the phosphothreonine modification. N6-acetyllysine; alternate is present on residues Lys116 and Lys123. An N6-glutaryllysine; alternate mark is found at Lys116 and Lys123. Lys123 carries the post-translational modification N6-(2-hydroxyisobutyryl)lysine; alternate. Lys123 is subject to N6-methyllysine; alternate. Lys123 is modified (N6-succinyllysine; alternate).

This sequence belongs to the histone H3 family. As to quaternary structure, the nucleosome is a histone octamer containing two molecules each of H2A, H2B, H3 and H4 assembled in one H3-H4 heterotetramer and two H2A-H2B heterodimers. The octamer wraps approximately 147 bp of DNA. Interacts with TONSL; CHAF1A and CHAF1B. Post-translationally, acetylation is generally linked to gene activation. Acetylation on Lys-10 (H3K9ac) impairs methylation at Arg-9 (H3R8me2s). Acetylation on Lys-19 (H3K18ac) and Lys-24 (H3K24ac) favors methylation at Arg-18 (H3R17me). Acetylation at Lys-123 (H3K122ac) by EP300/p300 plays a central role in chromatin structure: localizes at the surface of the histone octamer and stimulates transcription, possibly by promoting nucleosome instability. In terms of processing, citrullination at Arg-9 (H3R8ci) and/or Arg-18 (H3R17ci) by PADI4 impairs methylation and represses transcription. Asymmetric dimethylation at Arg-18 (H3R17me2a) by CARM1 is linked to gene activation. Symmetric dimethylation at Arg-9 (H3R8me2s) by PRMT5 is linked to gene repression. Asymmetric dimethylation at Arg-3 (H3R2me2a) by PRMT6 is linked to gene repression and is mutually exclusive with H3 Lys-5 methylation (H3K4me2 and H3K4me3). H3R2me2a is present at the 3' of genes regardless of their transcription state and is enriched on inactive promoters, while it is absent on active promoters. Post-translationally, methylation at Lys-5 (H3K4me), Lys-37 (H3K36me) and Lys-80 (H3K79me) are linked to gene activation. Methylation at Lys-5 (H3K4me) facilitates subsequent acetylation of H3 and H4. Methylation at Lys-80 (H3K79me) is associated with DNA double-strand break (DSB) responses and is a specific target for TP53BP1. Methylation at Lys-10 (H3K9me) and Lys-28 (H3K27me) are linked to gene repression. Methylation at Lys-10 (H3K9me) is a specific target for HP1 proteins (CBX1, CBX3 and CBX5) and prevents subsequent phosphorylation at Ser-11 (H3S10ph) and acetylation of H3 and H4. Methylation at Lys-5 (H3K4me) and Lys-80 (H3K79me) require preliminary monoubiquitination of H2B at 'Lys-120'. Methylation at Lys-10 (H3K9me) and Lys-28 (H3K27me) are enriched in inactive X chromosome chromatin. Monomethylation at Lys-57 (H3K56me1) by EHMT2/G9A in G1 phase promotes interaction with PCNA and is required for DNA replication. In terms of processing, phosphorylated at Thr-4 (H3T3ph) by HASPIN during prophase and dephosphorylated during anaphase. Phosphorylation at Ser-11 (H3S10ph) by AURKB is crucial for chromosome condensation and cell-cycle progression during mitosis and meiosis. In addition phosphorylation at Ser-11 (H3S10ph) by RPS6KA4 and RPS6KA5 is important during interphase because it enables the transcription of genes following external stimulation, like mitogens, stress, growth factors or UV irradiation and result in the activation of genes, such as c-fos and c-jun. Phosphorylation at Ser-11 (H3S10ph), which is linked to gene activation, prevents methylation at Lys-10 (H3K9me) but facilitates acetylation of H3 and H4. Phosphorylation at Ser-11 (H3S10ph) by AURKB mediates the dissociation of HP1 proteins (CBX1, CBX3 and CBX5) from heterochromatin. Phosphorylation at Ser-11 (H3S10ph) is also an essential regulatory mechanism for neoplastic cell transformation. Phosphorylated at Ser-29 (H3S28ph) by MAP3K20 isoform 1, RPS6KA5 or AURKB during mitosis or upon ultraviolet B irradiation. Phosphorylation at Thr-7 (H3T6ph) by PRKCB is a specific tag for epigenetic transcriptional activation that prevents demethylation of Lys-5 (H3K4me) by LSD1/KDM1A. At centromeres, specifically phosphorylated at Thr-12 (H3T11ph) from prophase to early anaphase, by DAPK3 and PKN1. Phosphorylation at Thr-12 (H3T11ph) by PKN1 or isoform M2 of PKM (PKM2) is a specific tag for epigenetic transcriptional activation that promotes demethylation of Lys-10 (H3K9me) by KDM4C/JMJD2C. Phosphorylation at Tyr-42 (H3Y41ph) by JAK2 promotes exclusion of CBX5 (HP1 alpha) from chromatin. Ubiquitinated. Post-translationally, lysine deamination at Lys-5 (H3K4all) to form allysine is mediated by LOXL2. Allysine formation by LOXL2 only takes place on H3K4me3 and results in gene repression. In terms of processing, butyrylation of histones marks active promoters and competes with histone acetylation. It is present during late spermatogenesis. Succinylation at Lys-80 (H3K79succ) by KAT2A takes place with a maximum frequency around the transcription start sites of genes. It gives a specific tag for epigenetic transcription activation. Desuccinylation at Lys-123 (H3K122succ) by SIRT7 in response to DNA damage promotes chromatin condensation and double-strand breaks (DSBs) repair. Post-translationally, serine ADP-ribosylation constitutes the primary form of ADP-ribosylation of proteins in response to DNA damage. Serine ADP-ribosylation at Ser-11 (H3S10ADPr) is mutually exclusive with phosphorylation at Ser-11 (H3S10ph) and impairs acetylation at Lys-10 (H3K9ac). As to expression, expressed in testicular cells.

The protein resides in the nucleus. It localises to the chromosome. In terms of biological role, core component of nucleosome. Nucleosomes wrap and compact DNA into chromatin, limiting DNA accessibility to the cellular machineries which require DNA as a template. Histones thereby play a central role in transcription regulation, DNA repair, DNA replication and chromosomal stability. DNA accessibility is regulated via a complex set of post-translational modifications of histones, also called histone code, and nucleosome remodeling. The polypeptide is Histone H3.1t (Homo sapiens (Human)).